A 312-amino-acid chain; its full sequence is Olfactory receptor-like protein COR4 (312 aa).

Residues 1 to 26 (MASGNCTTPTTFILSGLTDNPGLQMP) lie on the Extracellular side of the membrane. Asn-5 carries N-linked (GlcNAc...) asparagine glycosylation. The chain crosses the membrane as a helical span at residues 27 to 49 (LFMVFLAIYTITLLTNLGLIALI). The Cytoplasmic segment spans residues 50-57 (SVDLHLQT). The helical transmembrane segment at 58 to 79 (PMYIFLQNLSFTDAAYSTVITP) threads the bilayer. The Extracellular portion of the chain corresponds to 80–100 (KMLATFLEERKTISYIGCILQ). An intrachain disulfide couples Cys-97 to Cys-179. Residues 101 to 120 (YFSFVLLTVTESLLLAVMAY) traverse the membrane as a helical segment. Residues 121-139 (DRYVAICKPLLYPSIMTKA) are Cytoplasmic-facing. Residues 140–164 (VCWRLVKGLYSLAFLNSLVHTSGLL) form a helical membrane-spanning segment. Topologically, residues 165–205 (KLSFCSSNVVNHFFCDNSPLFQISSSSTTLNELLVFIFGSL) are extracellular. The helical transmembrane segment at 206-226 (FAMSSIITILISYVFIILTVV) threads the bilayer. At 227–239 (RIRSKDGKYKAFS) the chain is on the cytoplasmic side. Residues 240–260 (TCTSHLMAVSLFHGTVIFMYL) form a helical membrane-spanning segment. Residues 261–271 (RPVKLFSLDTD) are Extracellular-facing. Residues 272 to 292 (KIASLFYTVVIPMLNPLIYSW) traverse the membrane as a helical segment. Topologically, residues 293 to 312 (RNKEVKDALRRVIATNVWIH) are cytoplasmic.

It belongs to the G-protein coupled receptor 1 family.

It is found in the cell membrane. In terms of biological role, odorant receptor. The protein is Olfactory receptor-like protein COR4 (COR4) of Gallus gallus (Chicken).